The sequence spans 312 residues: Methionyl-tRNA formyltransferase (312 aa).

117–120 (SLLP) contacts (6S)-5,6,7,8-tetrahydrofolate.

Belongs to the Fmt family.

It carries out the reaction L-methionyl-tRNA(fMet) + (6R)-10-formyltetrahydrofolate = N-formyl-L-methionyl-tRNA(fMet) + (6S)-5,6,7,8-tetrahydrofolate + H(+). Functionally, attaches a formyl group to the free amino group of methionyl-tRNA(fMet). The formyl group appears to play a dual role in the initiator identity of N-formylmethionyl-tRNA by promoting its recognition by IF2 and preventing the misappropriation of this tRNA by the elongation apparatus. The chain is Methionyl-tRNA formyltransferase from Bordetella bronchiseptica (strain ATCC BAA-588 / NCTC 13252 / RB50) (Alcaligenes bronchisepticus).